A 150-amino-acid chain; its full sequence is Large ribosomal subunit protein bL9 (150 aa).

Belongs to the bacterial ribosomal protein bL9 family.

In terms of biological role, binds to the 23S rRNA. The polypeptide is Large ribosomal subunit protein bL9 (Streptococcus pneumoniae (strain CGSP14)).